Consider the following 62-residue polypeptide: UPF0434 protein RL4569 (62 aa).

The protein belongs to the UPF0434 family.

This is UPF0434 protein RL4569 from Rhizobium johnstonii (strain DSM 114642 / LMG 32736 / 3841) (Rhizobium leguminosarum bv. viciae).